Here is a 363-residue protein sequence, read N- to C-terminus: Chorismate synthase (363 aa).

The NADP(+) site is built by Arg-48 and Arg-54. FMN-binding positions include 125–127, 237–238, Gly-277, 292–296, and Arg-318; these read RSS, NA, and KPTSS.

The protein belongs to the chorismate synthase family. In terms of assembly, homotetramer. Requires FMNH2 as cofactor.

The catalysed reaction is 5-O-(1-carboxyvinyl)-3-phosphoshikimate = chorismate + phosphate. It participates in metabolic intermediate biosynthesis; chorismate biosynthesis; chorismate from D-erythrose 4-phosphate and phosphoenolpyruvate: step 7/7. Functionally, catalyzes the anti-1,4-elimination of the C-3 phosphate and the C-6 proR hydrogen from 5-enolpyruvylshikimate-3-phosphate (EPSP) to yield chorismate, which is the branch point compound that serves as the starting substrate for the three terminal pathways of aromatic amino acid biosynthesis. This reaction introduces a second double bond into the aromatic ring system. This Stutzerimonas stutzeri (strain A1501) (Pseudomonas stutzeri) protein is Chorismate synthase.